The following is a 70-amino-acid chain: Cytochrome c oxidase subunit 8B, mitochondrial (70 aa).

A mitochondrion-targeting transit peptide spans 1–24 (MSRLAPPLRLLQAPLKCWAVPKAH). The Mitochondrial matrix portion of the chain corresponds to 25–35 (VSAKPARTPTS). The helical transmembrane segment at 36-59 (PMEQAVGLSVMFVSFLVPSGWVLS) threads the bilayer. Residues 60 to 70 (HLESYKKSSTT) are Mitochondrial intermembrane-facing.

Belongs to the cytochrome c oxidase VIII family. As to quaternary structure, component of the cytochrome c oxidase (complex IV, CIV), a multisubunit enzyme composed of 14 subunits. The complex is composed of a catalytic core of 3 subunits MT-CO1, MT-CO2 and MT-CO3, encoded in the mitochondrial DNA, and 11 supernumerary subunits COX4I, COX5A, COX5B, COX6A, COX6B, COX6C, COX7A, COX7B, COX7C, COX8 and NDUFA4, which are encoded in the nuclear genome. The complex exists as a monomer or a dimer and forms supercomplexes (SCs) in the inner mitochondrial membrane with NADH-ubiquinone oxidoreductase (complex I, CI) and ubiquinol-cytochrome c oxidoreductase (cytochrome b-c1 complex, complex III, CIII), resulting in different assemblies (supercomplex SCI(1)III(2)IV(1) and megacomplex MCI(2)III(2)IV(2)).

The protein resides in the mitochondrion inner membrane. Its pathway is energy metabolism; oxidative phosphorylation. Component of the cytochrome c oxidase, the last enzyme in the mitochondrial electron transport chain which drives oxidative phosphorylation. The respiratory chain contains 3 multisubunit complexes succinate dehydrogenase (complex II, CII), ubiquinol-cytochrome c oxidoreductase (cytochrome b-c1 complex, complex III, CIII) and cytochrome c oxidase (complex IV, CIV), that cooperate to transfer electrons derived from NADH and succinate to molecular oxygen, creating an electrochemical gradient over the inner membrane that drives transmembrane transport and the ATP synthase. Cytochrome c oxidase is the component of the respiratory chain that catalyzes the reduction of oxygen to water. Electrons originating from reduced cytochrome c in the intermembrane space (IMS) are transferred via the dinuclear copper A center (CU(A)) of subunit 2 and heme A of subunit 1 to the active site in subunit 1, a binuclear center (BNC) formed by heme A3 and copper B (CU(B)). The BNC reduces molecular oxygen to 2 water molecules using 4 electrons from cytochrome c in the IMS and 4 protons from the mitochondrial matrix. In Carlito syrichta (Philippine tarsier), this protein is Cytochrome c oxidase subunit 8B, mitochondrial (COX8B).